The chain runs to 471 residues: Bifunctional protein GlmU (471 aa).

Residues 1–235 (MVAVAILAAG…YQEIFGINNR (235 aa)) are pyrophosphorylase. Residues 7–10 (LAAG), K21, Q82, and 87–88 (GT) contribute to the UDP-N-acetyl-alpha-D-glucosamine site. Residue D112 participates in Mg(2+) binding. 4 residues coordinate UDP-N-acetyl-alpha-D-glucosamine: G149, E164, N179, and N233. N233 lines the Mg(2+) pocket. Residues 236 to 256 (KHLAKAHEILQVRVKDDWMEA) form a linker region. The interval 257-471 (GVTLIDPDSI…SKKEENKSSP (215 aa)) is N-acetyltransferase. 2 residues coordinate UDP-N-acetyl-alpha-D-glucosamine: R338 and K356. Catalysis depends on H368, which acts as the Proton acceptor. UDP-N-acetyl-alpha-D-glucosamine is bound by residues Y371 and N382. Residues A385, 391–392 (NY), S410, A428, and R445 contribute to the acetyl-CoA site.

The protein in the N-terminal section; belongs to the N-acetylglucosamine-1-phosphate uridyltransferase family. It in the C-terminal section; belongs to the transferase hexapeptide repeat family. Homotrimer. Requires Mg(2+) as cofactor.

The protein resides in the cytoplasm. The enzyme catalyses alpha-D-glucosamine 1-phosphate + acetyl-CoA = N-acetyl-alpha-D-glucosamine 1-phosphate + CoA + H(+). It catalyses the reaction N-acetyl-alpha-D-glucosamine 1-phosphate + UTP + H(+) = UDP-N-acetyl-alpha-D-glucosamine + diphosphate. It functions in the pathway nucleotide-sugar biosynthesis; UDP-N-acetyl-alpha-D-glucosamine biosynthesis; N-acetyl-alpha-D-glucosamine 1-phosphate from alpha-D-glucosamine 6-phosphate (route II): step 2/2. Its pathway is nucleotide-sugar biosynthesis; UDP-N-acetyl-alpha-D-glucosamine biosynthesis; UDP-N-acetyl-alpha-D-glucosamine from N-acetyl-alpha-D-glucosamine 1-phosphate: step 1/1. The protein operates within bacterial outer membrane biogenesis; LPS lipid A biosynthesis. Functionally, catalyzes the last two sequential reactions in the de novo biosynthetic pathway for UDP-N-acetylglucosamine (UDP-GlcNAc). The C-terminal domain catalyzes the transfer of acetyl group from acetyl coenzyme A to glucosamine-1-phosphate (GlcN-1-P) to produce N-acetylglucosamine-1-phosphate (GlcNAc-1-P), which is converted into UDP-GlcNAc by the transfer of uridine 5-monophosphate (from uridine 5-triphosphate), a reaction catalyzed by the N-terminal domain. This is Bifunctional protein GlmU from Trichodesmium erythraeum (strain IMS101).